A 1129-amino-acid chain; its full sequence is Nuclear pore complex protein 15 (1129 aa).

This sequence belongs to the nucleoporin Nup133 family.

It is found in the nucleus envelope. It localises to the nucleus. The protein localises to the nuclear pore complex. Its function is as follows. Important for early nematode development. This is Nuclear pore complex protein 15 from Caenorhabditis elegans.